Consider the following 107-residue polypeptide: UPF0145 protein Sfri_2095 (107 aa).

It belongs to the UPF0145 family.

This chain is UPF0145 protein Sfri_2095, found in Shewanella frigidimarina (strain NCIMB 400).